A 220-amino-acid chain; its full sequence is Deoxyribose-phosphate aldolase (220 aa).

The Proton donor/acceptor role is filled by Asp89. Lys151 acts as the Schiff-base intermediate with acetaldehyde in catalysis. Lys180 functions as the Proton donor/acceptor in the catalytic mechanism.

The protein belongs to the DeoC/FbaB aldolase family. DeoC type 1 subfamily.

The protein localises to the cytoplasm. The catalysed reaction is 2-deoxy-D-ribose 5-phosphate = D-glyceraldehyde 3-phosphate + acetaldehyde. Its pathway is carbohydrate degradation; 2-deoxy-D-ribose 1-phosphate degradation; D-glyceraldehyde 3-phosphate and acetaldehyde from 2-deoxy-alpha-D-ribose 1-phosphate: step 2/2. In terms of biological role, catalyzes a reversible aldol reaction between acetaldehyde and D-glyceraldehyde 3-phosphate to generate 2-deoxy-D-ribose 5-phosphate. The sequence is that of Deoxyribose-phosphate aldolase from Streptococcus mutans serotype c (strain ATCC 700610 / UA159).